The chain runs to 165 residues: Glycosyl-4,4'-diaponeurosporenoate acyltransferase (165 aa).

An N-terminal signal peptide occupies residues 1-28; that stretch reads MKTMKKYIKTAFFCSMYWLIVQLNIANL. The chain crosses the membrane as a helical span at residues 126 to 145; that stretch reads YINIFYAMIANVPIIIVQRY.

This sequence belongs to the acyltransferase CrtO family.

The protein localises to the cell membrane. It functions in the pathway carotenoid biosynthesis; staphyloxanthin biosynthesis; staphyloxanthin from farnesyl diphosphate: step 5/5. Functionally, catalyzes the acylation of glycosyl-4,4'-diaponeurosporenoate, i.e. the esterification of glucose at the C6'' position with the carboxyl group of the C(15) fatty acid 12-methyltetradecanoic acid, to yield staphyloxanthin. This is the last step in the biosynthesis of this orange pigment, present in most staphylococci strains. This is Glycosyl-4,4'-diaponeurosporenoate acyltransferase (crtO) from Staphylococcus aureus (strain Newman).